Consider the following 649-residue polypeptide: Probable ADP-ribosylation factor GTPase-activating protein AGD14 (649 aa).

The region spanning glutamate 12–lysine 130 is the Arf-GAP domain. Residues cysteine 27–cysteine 50 form a C4-type zinc finger. 4 disordered regions span residues glycine 124–proline 159, phenylalanine 209–valine 279, leucine 294–valine 316, and phenylalanine 366–lysine 391. Positions aspartate 127 to arginine 146 are enriched in basic and acidic residues. Residues serine 150 to proline 159 are compositionally biased toward low complexity. 4 stretches are compositionally biased toward polar residues: residues proline 248–proline 257, arginine 269–valine 279, glutamate 300–histidine 315, and phenylalanine 366–serine 385.

Functionally, GTPase-activating protein (GAP) for ADP ribosylation factor (ARF). The chain is Probable ADP-ribosylation factor GTPase-activating protein AGD14 (AGD14) from Arabidopsis thaliana (Mouse-ear cress).